Here is a 300-residue protein sequence, read N- to C-terminus: 4-hydroxy-tetrahydrodipicolinate synthase (300 aa).

T56 is a pyruvate binding site. Y145 functions as the Proton donor/acceptor in the catalytic mechanism. K173 functions as the Schiff-base intermediate with substrate in the catalytic mechanism. V215 is a pyruvate binding site.

This sequence belongs to the DapA family. Homotetramer; dimer of dimers.

Its subcellular location is the cytoplasm. It carries out the reaction L-aspartate 4-semialdehyde + pyruvate = (2S,4S)-4-hydroxy-2,3,4,5-tetrahydrodipicolinate + H2O + H(+). It functions in the pathway amino-acid biosynthesis; L-lysine biosynthesis via DAP pathway; (S)-tetrahydrodipicolinate from L-aspartate: step 3/4. Catalyzes the condensation of (S)-aspartate-beta-semialdehyde [(S)-ASA] and pyruvate to 4-hydroxy-tetrahydrodipicolinate (HTPA). This chain is 4-hydroxy-tetrahydrodipicolinate synthase, found in Prochlorococcus marinus (strain AS9601).